The primary structure comprises 333 residues: D-alanine--D-alanine ligase (333 aa).

Positions lysine 124–lysine 329 constitute an ATP-grasp domain. Alanine 154–glutamate 209 contributes to the ATP binding site. Residues aspartate 283, glutamate 296, and asparagine 298 each contribute to the Mg(2+) site.

This sequence belongs to the D-alanine--D-alanine ligase family. The cofactor is Mg(2+). Mn(2+) serves as cofactor.

It localises to the cytoplasm. The catalysed reaction is 2 D-alanine + ATP = D-alanyl-D-alanine + ADP + phosphate + H(+). It participates in cell wall biogenesis; peptidoglycan biosynthesis. Its function is as follows. Cell wall formation. In Shewanella sediminis (strain HAW-EB3), this protein is D-alanine--D-alanine ligase.